The sequence spans 613 residues: Serine protease FAM111A (613 aa).

Positions 1–72 are disordered; that stretch reads MSCKKRKSQI…TRQDQTPPLN (72 aa). Residue Lys-19 forms a Glycyl lysine isopeptide (Lys-Gly) (interchain with G-Cter in SUMO2) linkage. Phosphoserine is present on Ser-25. A Glycyl lysine isopeptide (Lys-Gly) (interchain with G-Cter in SUMO2) cross-link involves residue Lys-29. The span at 40-56 shows a compositional bias: basic and acidic residues; the sequence is VDSKKMPRDITNTRDQR. A Glycyl lysine isopeptide (Lys-Gly) (interchain with G-Cter in SUMO2) cross-link involves residue Lys-62. Active-site charge relay system residues include His-383, Asp-437, and Ser-543.

Belongs to the FAM111 family. Interacts (via PIP-box) with PCNA; this interaction is direct. In terms of processing, autocatalytically cleaved; autocatalytic cleavage takes place in trans.

The protein localises to the nucleus. Its subcellular location is the chromosome. It localises to the cytoplasm. Functionally, single-stranded DNA-binding serine protease that mediates the proteolytic cleavage of covalent DNA-protein cross-links (DPCs) during DNA synthesis, thereby playing a key role in maintaining genomic integrity. DPCs are highly toxic DNA lesions that interfere with essential chromatin transactions, such as replication and transcription, and which are induced by reactive agents, such as UV light or formaldehyde. Protects replication fork from stalling by removing DPCs, such as covalently trapped topoisomerase 1 (TOP1) adducts on DNA lesion, or poly(ADP-ribose) polymerase 1 (PARP1)-DNA complexes trapped by PARP inhibitors. Required for PCNA loading on replication sites. Promotes S-phase entry and DNA synthesis. The polypeptide is Serine protease FAM111A (Mus musculus (Mouse)).